We begin with the raw amino-acid sequence, 1277 residues long: MAHTQRQQGGSRGQWSRCLLLLLLLPLAAQPGRAAIQIPSSYYISDLKIPPAITTQPESVTVFSVEDLVMRCEASGNPSPTFHWTKDGEEFDPSSDPEMKVTEEAGSSVFYTLSNTMDTLKQYQGKYICYASNELGTAVSNAAVLMIDAPPVQQKEKKVTEKAEAGHSIALSCNPPQSSMQPIIHWMDNRLRHIRLSDRVMVGKDGNLYFANLLTEDSRNDYTCNIQYLATRTILAKEPITLTVNPSNLVPRNRRPQMMRPTGSHSTYHALRGQTLELECIVQGLPTPKVSWLRKDGEMSESRISKDMFDRRLQFTNISESDGGEYQCTAENVQGRTFHTYTVTVEASPYWTNAPVSQLYAPGETVKLDCQADGIPSPTITWTVNGVPLSATSLEPRRSLTESGSLILKDVIFGDTAIYQCQASNKHGTILANTNVYVIELPPQILTENGNTYTFVEGQKALLECETFGSPKPKVTWESSSISLLLADPRVNLLTNGGLEIANVSHDDEGIYTCLVQGSNISVNAEVEVLNRTVILSPPQALRLQPGKTAIFTCLYVTDPKLSSPLLQWRKNDQKIFESHSDKKYTFDGPGLIISNVEPGDEGVYTCQIITKLDMVEASSTLTLCDRPDPPVHLQVTNAKHRVVTLNWTPGDDNNSPILEYVVEFEDQDMKENGWEELKRVAADKKHVNLPLWPYMSYRFRVIAINDQGKSDPSKLSDLYKTPADAPDSNPEDVRSESTDPDTLVITWEEMDKRNFNGPDFKYLVMWRRVVGSGPDWHEEYTIAPPFIVTDVQNFSAFEIKVQAVNKKGLGPEPDPIIGYSGEDVPLEAPLNLGVLLENSTTIRVTWSAVDKETVRGHLLGYKIYLTWGHHRNSRAQEPENIVMVQTGANEEKKSITNLRPYCHYDLAISAFNSKGEGPLSEKTSFMTPEGVPGPPMSMQMTSPSESEITLHWTPPSKPNGILLGYSLQYRKMQSDDNPLQVVDIASPEITHLTLKGLDRHSHYQFLLMARTAAGKGLSIEILGATTLEGLPPANISLSAEERSVNLSWEARKRHRTVGFQIHYFSKNGTKNGGKWKKTEMVNSSLQFFQLQGLTPGSHYRLLFTYKNNTFWETEIQTKGTSVTEVQPSFATQGWFIGVVSAVVLLLLVLLILCFIKRSKGGKYSVKDKEDGPMDSEARPMKDETFGEYRSLESDLEEKRTASQPSLGEDSKLCSEDNLDFNGSSAVTTELNMDESLASQFSRHSEGPEPFHGVPDNSPLNPAANPPATNGAPSFLN.

Positions 1–34 (MAHTQRQQGGSRGQWSRCLLLLLLLPLAAQPGRA) are cleaved as a signal peptide. Residues 35–1135 (AIQIPSSYYI…VQPSFATQGW (1101 aa)) lie on the Extracellular side of the membrane. 5 Ig-like C2-type domains span residues 51–140 (PAIT…TAVS), 150–241 (PPVQ…EPIT), 256–344 (PQMM…YTVT), 349–437 (PYWT…TNVY), and 443–528 (PQIL…AEVE). 5 cysteine pairs are disulfide-bonded: Cys72/Cys129, Cys173/Cys224, Cys280/Cys328, Cys370/Cys421, and Cys465/Cys514. A glycan (N-linked (GlcNAc...) asparagine) is linked at Asn317. N-linked (GlcNAc...) asparagine glycans are attached at residues Asn503, Asn520, and Asn531. An Ig-like C2-type 6 domain is found at 532-623 (RTVILSPPQA…DMVEASSTLT (92 aa)). The cysteines at positions 554 and 607 are disulfide-linked. Fibronectin type-III domains follow at residues 630–725 (PPVH…TPAD), 730–824 (NPED…SGED), 829–931 (APLN…TPEG), 935–1030 (PPMS…TLEG), and 1032–1129 (PPAN…VQPS). A disordered region spans residues 714-740 (SKLSDLYKTPADAPDSNPEDVRSESTD). N-linked (GlcNAc...) asparagine glycosylation is found at Asn794 and Asn839. N-linked (GlcNAc...) asparagine glycosylation is found at Asn1035, Asn1046, Asn1068, Asn1083, and Asn1108. A helical transmembrane segment spans residues 1136 to 1156 (FIGVVSAVVLLLLVLLILCFI). The Cytoplasmic portion of the chain corresponds to 1157 to 1277 (KRSKGGKYSV…ATNGAPSFLN (121 aa)). 2 disordered regions span residues 1163 to 1216 (KYSV…LCSE) and 1232 to 1277 (NMDE…SFLN). Positions 1165-1201 (SVKDKEDGPMDSEARPMKDETFGEYRSLESDLEEKRT) are enriched in basic and acidic residues. Residues 1232–1242 (NMDESLASQFS) show a composition bias toward polar residues. Residues 1255-1277 (PDNSPLNPAANPPATNGAPSFLN) show a composition bias toward low complexity.

It belongs to the immunoglobulin superfamily. L1/neurofascin/NgCAM family.

It is found in the cell membrane. The protein localises to the cell projection. Its subcellular location is the growth cone. Neural cell adhesion molecule involved in the dynamics of cell adhesion and in the generation of transmembrane signals at tyrosine kinase receptors. During brain development, critical in multiple processes, including neuronal migration, axonal growth and fasciculation, and synaptogenesis. In the mature brain, plays a role in the dynamics of neuronal structure and function, including synaptic plasticity. This is Neural cell adhesion molecule L1 (l1cam) from Takifugu rubripes (Japanese pufferfish).